The sequence spans 511 residues: Bifunctional purine biosynthesis protein PurH (511 aa).

The MGS-like domain maps to 1–145; that stretch reads MKKRALVSVS…KNHQFVSVIV (145 aa).

It belongs to the PurH family.

It carries out the reaction (6R)-10-formyltetrahydrofolate + 5-amino-1-(5-phospho-beta-D-ribosyl)imidazole-4-carboxamide = 5-formamido-1-(5-phospho-D-ribosyl)imidazole-4-carboxamide + (6S)-5,6,7,8-tetrahydrofolate. The catalysed reaction is IMP + H2O = 5-formamido-1-(5-phospho-D-ribosyl)imidazole-4-carboxamide. The protein operates within purine metabolism; IMP biosynthesis via de novo pathway; 5-formamido-1-(5-phospho-D-ribosyl)imidazole-4-carboxamide from 5-amino-1-(5-phospho-D-ribosyl)imidazole-4-carboxamide (10-formyl THF route): step 1/1. It functions in the pathway purine metabolism; IMP biosynthesis via de novo pathway; IMP from 5-formamido-1-(5-phospho-D-ribosyl)imidazole-4-carboxamide: step 1/1. The sequence is that of Bifunctional purine biosynthesis protein PurH from Bacillus cereus (strain G9842).